Consider the following 217-residue polypeptide: Probable transaldolase (217 aa).

Lysine 83 functions as the Schiff-base intermediate with substrate in the catalytic mechanism.

The protein belongs to the transaldolase family. Type 3B subfamily.

It is found in the cytoplasm. It carries out the reaction D-sedoheptulose 7-phosphate + D-glyceraldehyde 3-phosphate = D-erythrose 4-phosphate + beta-D-fructose 6-phosphate. The protein operates within carbohydrate degradation; pentose phosphate pathway; D-glyceraldehyde 3-phosphate and beta-D-fructose 6-phosphate from D-ribose 5-phosphate and D-xylulose 5-phosphate (non-oxidative stage): step 2/3. Transaldolase is important for the balance of metabolites in the pentose-phosphate pathway. The polypeptide is Probable transaldolase (Roseobacter denitrificans (strain ATCC 33942 / OCh 114) (Erythrobacter sp. (strain OCh 114))).